Here is a 212-residue protein sequence, read N- to C-terminus: Translation initiation factor IF-3 (212 aa).

The span at 190 to 203 shows a compositional bias: basic and acidic residues; it reads LVDKNSDSQDKSVS. The tract at residues 190 to 212 is disordered; sequence LVDKNSDSQDKSVSEEDTNEGEQ.

Belongs to the IF-3 family. As to quaternary structure, monomer.

It is found in the cytoplasm. Its function is as follows. IF-3 binds to the 30S ribosomal subunit and shifts the equilibrium between 70S ribosomes and their 50S and 30S subunits in favor of the free subunits, thus enhancing the availability of 30S subunits on which protein synthesis initiation begins. This is Translation initiation factor IF-3 from Mycoplasmopsis fermentans (Mycoplasma fermentans).